The following is a 370-amino-acid chain: 3-dehydroquinate synthase (370 aa).

NAD(+)-binding positions include 107–111, 131–132, Lys-144, and Lys-153; these read GVIGD and TS. Zn(2+) is bound by residues Glu-186, His-249, and His-267.

This sequence belongs to the sugar phosphate cyclases superfamily. Dehydroquinate synthase family. It depends on Co(2+) as a cofactor. Requires Zn(2+) as cofactor. The cofactor is NAD(+).

The protein localises to the cytoplasm. The catalysed reaction is 7-phospho-2-dehydro-3-deoxy-D-arabino-heptonate = 3-dehydroquinate + phosphate. The protein operates within metabolic intermediate biosynthesis; chorismate biosynthesis; chorismate from D-erythrose 4-phosphate and phosphoenolpyruvate: step 2/7. In terms of biological role, catalyzes the conversion of 3-deoxy-D-arabino-heptulosonate 7-phosphate (DAHP) to dehydroquinate (DHQ). The protein is 3-dehydroquinate synthase of Roseobacter denitrificans (strain ATCC 33942 / OCh 114) (Erythrobacter sp. (strain OCh 114)).